A 980-amino-acid chain; its full sequence is Phosphoenolpyruvate carboxylase (980 aa).

Active-site residues include histidine 182 and lysine 625.

The protein belongs to the PEPCase type 1 family. It depends on Mg(2+) as a cofactor.

The enzyme catalyses oxaloacetate + phosphate = phosphoenolpyruvate + hydrogencarbonate. In terms of biological role, forms oxaloacetate, a four-carbon dicarboxylic acid source for the tricarboxylic acid cycle. The sequence is that of Phosphoenolpyruvate carboxylase from Bordetella pertussis (strain Tohama I / ATCC BAA-589 / NCTC 13251).